A 127-amino-acid chain; its full sequence is Large ribosomal subunit protein bL17 (127 aa).

This sequence belongs to the bacterial ribosomal protein bL17 family. As to quaternary structure, part of the 50S ribosomal subunit. Contacts protein L32.

This is Large ribosomal subunit protein bL17 from Stenotrophomonas maltophilia (strain R551-3).